The primary structure comprises 327 residues: Undecaprenyl-phosphate 4-deoxy-4-formamido-L-arabinose transferase (327 aa).

Residues 1 to 235 lie on the Cytoplasmic side of the membrane; sequence MFDAAPIKKV…TCLTTTPLRL (235 aa). Residues 236–256 traverse the membrane as a helical segment; the sequence is LSLLGSVIAIGGFSLSVLLIV. Residues 257-269 are Periplasmic-facing; that stretch reads LRLALGPQWAAEG. Residues 270 to 290 form a helical membrane-spanning segment; sequence VFMLFAVLFTFIGAQFIGMGL. The Cytoplasmic segment spans residues 291-327; it reads LGEYIGRIYNDVRARPRYFVQQVIYPESTPFTEESHQ.

The protein belongs to the glycosyltransferase 2 family.

The protein localises to the cell inner membrane. The enzyme catalyses UDP-4-deoxy-4-formamido-beta-L-arabinose + di-trans,octa-cis-undecaprenyl phosphate = 4-deoxy-4-formamido-alpha-L-arabinopyranosyl di-trans,octa-cis-undecaprenyl phosphate + UDP. Its pathway is glycolipid biosynthesis; 4-amino-4-deoxy-alpha-L-arabinose undecaprenyl phosphate biosynthesis; 4-amino-4-deoxy-alpha-L-arabinose undecaprenyl phosphate from UDP-4-deoxy-4-formamido-beta-L-arabinose and undecaprenyl phosphate: step 1/2. The protein operates within bacterial outer membrane biogenesis; lipopolysaccharide biosynthesis. Functionally, catalyzes the transfer of 4-deoxy-4-formamido-L-arabinose from UDP to undecaprenyl phosphate. The modified arabinose is attached to lipid A and is required for resistance to polymyxin and cationic antimicrobial peptides. This chain is Undecaprenyl-phosphate 4-deoxy-4-formamido-L-arabinose transferase, found in Salmonella dublin (strain CT_02021853).